A 375-amino-acid chain; its full sequence is 23S rRNA (uracil(747)-C(5))-methyltransferase RlmC (375 aa).

Residues Cys3, Cys11, Cys14, and Cys87 each coordinate [4Fe-4S] cluster. Gln212, Phe241, Glu262, and Asn307 together coordinate S-adenosyl-L-methionine. Catalysis depends on Cys334, which acts as the Nucleophile.

Belongs to the class I-like SAM-binding methyltransferase superfamily. RNA M5U methyltransferase family. RlmC subfamily.

The enzyme catalyses uridine(747) in 23S rRNA + S-adenosyl-L-methionine = 5-methyluridine(747) in 23S rRNA + S-adenosyl-L-homocysteine + H(+). Functionally, catalyzes the formation of 5-methyl-uridine at position 747 (m5U747) in 23S rRNA. The polypeptide is 23S rRNA (uracil(747)-C(5))-methyltransferase RlmC (Yersinia enterocolitica serotype O:8 / biotype 1B (strain NCTC 13174 / 8081)).